Reading from the N-terminus, the 1457-residue chain is DNA-directed RNA polymerase III subunit RPC1 (1457 aa).

Positions 67, 70, 77, 80, 107, 110, and 154 each coordinate Zn(2+). Residues Asp508, Asp510, and Asp512 each coordinate Mg(2+). The tract at residues 854 to 866 (PPEFLFHSISGRE) is bridging helix.

It belongs to the RNA polymerase beta' chain family. In terms of assembly, component of the RNA polymerase III (Pol III) complex consisting of 17 subunits.

The protein resides in the nucleus. The catalysed reaction is RNA(n) + a ribonucleoside 5'-triphosphate = RNA(n+1) + diphosphate. Its function is as follows. DNA-dependent RNA polymerase catalyzes the transcription of DNA into RNA using the four ribonucleoside triphosphates as substrates. Largest and catalytic core component of RNA polymerase III which synthesizes small RNAs, such as 5S rRNA and tRNAs. Forms the polymerase active center together with the second largest subunit. A single-stranded DNA template strand of the promoter is positioned within the central active site cleft of Pol III. A bridging helix emanates from RPC1 and crosses the cleft near the catalytic site and is thought to promote translocation of Pol III by acting as a ratchet that moves the RNA-DNA hybrid through the active site by switching from straight to bent conformations at each step of nucleotide addition. In Debaryomyces hansenii (strain ATCC 36239 / CBS 767 / BCRC 21394 / JCM 1990 / NBRC 0083 / IGC 2968) (Yeast), this protein is DNA-directed RNA polymerase III subunit RPC1 (RPC1).